Here is a 448-residue protein sequence, read N- to C-terminus: Oxysterol-binding protein homolog 6 (448 aa).

Residues 1-42 (MGSKKLTVGSDSHRLSKSSFSSNKSSHSATKDQPIDTDDIDE) form a disordered region. Serine 16 bears the Phosphoserine mark. Positions 17–28 (KSSFSSNKSSHS) are enriched in low complexity. The interval 54–391 (IISQLRPGCD…PGEDLDYCIY (338 aa)) is OSBP-related domain (ORD). Residues 64 to 69 (LTRITL), 126 to 129 (KPLN), and 157 to 158 (HH) each bind a 1,2-diacyl-sn-glycero-3-phospho-(1D-myo-inositol 4-phosphate). A 1,2-diacyl-sn-glycero-3-phospho-L-serine is bound by residues 64–69 (LTRITL) and asparagine 129. Serine 183 serves as a coordination point for a 1,2-diacyl-sn-glycero-3-phospho-L-serine. Residues lysine 351, glutamate 355, and arginine 359 each coordinate a 1,2-diacyl-sn-glycero-3-phospho-(1D-myo-inositol 4-phosphate).

It belongs to the OSBP family. As to quaternary structure, interacts with the AAA ATPase VPS4; regulates OSH6 membrane association. VPS4 is required for membrane dissociation of OSH6.

The protein resides in the cytoplasm. The protein localises to the cell membrane. Its subcellular location is the endoplasmic reticulum membrane. It catalyses the reaction a 1,2-diacyl-sn-glycero-3-phospho-L-serine(in) = a 1,2-diacyl-sn-glycero-3-phospho-L-serine(out). In terms of biological role, lipid transport protein (LTP) involved in non-vesicular transfer of lipids between membranes. Functions in phosphoinositide-coupled directional transport of various lipids by carrying the lipid molecule in a hydrophobic pocket and transferring it between membranes through the cytosol. Involved in maintenance of intracellular sterol distribution and homeostasis. Catalyzes the lipid countertransport between the endoplasmic reticulum (ER) and the plasma membrane (PM). Specifically exchanges phosphatidylserine (PS) with phosphatidylinositol 4-phosphate (PI4P), delivering phosphatidylserine to the PM in exchange for PI4P, which is delivered to the ER-localized PI4P phosphatase SAC1 for degradation. Thus, by maintaining a PI4P gradient at the ER/PM interface, SAC1 drives PS transport. Binds phosphatidylserine and PI4P in a mutually exclusive manner. Also binds phosphatidic acid (PA). This Saccharomyces cerevisiae (strain ATCC 204508 / S288c) (Baker's yeast) protein is Oxysterol-binding protein homolog 6.